The primary structure comprises 398 residues: MGAPAASLLLLLLLFACCWAPGGANLSQDDSQPWTSDETVVAGGTVVLKCQVKDHEDSSLQWSNPAQQTLYFGEKRALRDNRIQLVTSTPHELSISISNVALADEGEYTCSIFTMPVRTAKSLVTVLGIPQKPIITGYKSSLREKDTATLNCQSSGSKPAARLTWRKGDQELHGEPTRIQEDPNGKTFTVSSSVTFQVTREDDGASIVCSVNHESLKGADRSTSQRIEVLYTPTAMIRPDPPHPREGQKLLLHCEGRGNPVPQQYLWEKEGSVPPLKMTQESALIFPFLNKSDSGTYGCTATSNMGSYKAYYTLNVNDPSPVPSSSSTYHAIIGGIVAFIVFLLLIMLIFLGHYLIRHKGTYLTHEAKGSDDAPDADTAIINAEGGQSGGDDKKEYFI.

The N-terminal stretch at 1 to 24 (MGAPAASLLLLLLLFACCWAPGGA) is a signal peptide. The Ig-like V-type domain occupies 25–126 (NLSQDDSQPW…VRTAKSLVTV (102 aa)). Topologically, residues 25–330 (NLSQDDSQPW…PVPSSSSTYH (306 aa)) are extracellular. 3 disulfide bridges follow: C50–C110, C152–C209, and C254–C299. Ig-like C2-type domains lie at 130–228 (PQKP…QRIE) and 233–315 (PTAM…YTLN). N290 carries N-linked (GlcNAc...) asparagine glycosylation. A helical membrane pass occupies residues 331-351 (AIIGGIVAFIVFLLLIMLIFL). Over 352 to 398 (GHYLIRHKGTYLTHEAKGSDDAPDADTAIINAEGGQSGGDDKKEYFI) the chain is Cytoplasmic. Residues 367-398 (AKGSDDAPDADTAIINAEGGQSGGDDKKEYFI) form a disordered region. S388 bears the Phosphoserine mark.

The protein belongs to the nectin family. In terms of assembly, homodimer. Can form trans-heterodimers with NECTIN3. Interacts with EPB41L1, DLG3, PALS2 and CASK. Isoform 1 is expressed mainly in adult and fetal brain. Isoform 2 is highly expressed in adult brain and weakly expressed in placenta. In brain, Isoform 2 is highly expressed in cerebellum.

Its subcellular location is the cell membrane. It is found in the cell junction. Its function is as follows. Involved in cell-cell adhesion. Has both calcium-independent homophilic cell-cell adhesion activity and calcium-independent heterophilic cell-cell adhesion activity with IGSF4, NECTIN1 and NECTIN3. Interaction with EPB41L1 may regulate structure or function of cell-cell junctions. This chain is Cell adhesion molecule 3 (CADM3), found in Homo sapiens (Human).